A 393-amino-acid chain; its full sequence is Branched-chain-amino-acid aminotransferase, mitochondrial (393 aa).

The N-terminal 27 residues, 1-27 (MATAALRQIWIPRFLPVPWFLCGSRRY), are a transit peptide targeting the mitochondrion. Position 169 (Tyr-169) interacts with substrate. Lys-230 carries the N6-(pyridoxal phosphate)lysine modification. Lys-322 is modified (N6-acetyllysine).

Belongs to the class-IV pyridoxal-phosphate-dependent aminotransferase family. In terms of assembly, homodimer. It depends on pyridoxal 5'-phosphate as a cofactor.

It is found in the mitochondrion. It carries out the reaction L-leucine + 2-oxoglutarate = 4-methyl-2-oxopentanoate + L-glutamate. The enzyme catalyses L-isoleucine + 2-oxoglutarate = (S)-3-methyl-2-oxopentanoate + L-glutamate. It catalyses the reaction L-valine + 2-oxoglutarate = 3-methyl-2-oxobutanoate + L-glutamate. In terms of biological role, catalyzes the first reaction in the catabolism of the essential branched chain amino acids leucine, isoleucine, and valine. May also function as a transporter of branched chain alpha-keto acids. In Bos taurus (Bovine), this protein is Branched-chain-amino-acid aminotransferase, mitochondrial (BCAT2).